The following is a 430-amino-acid chain: MLDSLDLVIDTIVAREVLDSRGNPTVEAEVLLEGGASGRAIVPSGASTGAHEAHELRDGGDRYMGKGVTKAVDHIEERIAPALCGLSALDQGSVDAAMLELDGSDNKSGLGANAILAVSMATARAAANGLGLPLYRYLGGPMATLLPVPLMNVINGGAHAANNLDFQEFMLVPHGAPNFREALRMGTEVFHTLKNLLSERGMSTSVGDEGGFAPDLGNEEAGEVLVQAIEKAGYKPGEQISLALDVASTEFYSDGRYAFSGGSYSSAEMVDQLEQLVNRFPIISIEDGLAEDDWEGWALLTERLGKRVQLVGDDLFVTNTKRLQRGIDANTANSILIKVNQIGSLTETLQAIDLAGRSGYTSVISHRSGETEDTTIADLAVATRAGQIKTGSLSRSERVAKYNQLLRIEDELGDQAVYAGATGQGPRGRD.

(2R)-2-phosphoglycerate is bound at residue Gln167. Glu209 (proton donor) is an active-site residue. Residues Asp245, Glu286, and Asp313 each coordinate Mg(2+). Residues Lys338, Arg367, Ser368, and Lys389 each contribute to the (2R)-2-phosphoglycerate site. Catalysis depends on Lys338, which acts as the Proton acceptor.

The protein belongs to the enolase family. The cofactor is Mg(2+).

The protein resides in the cytoplasm. It is found in the secreted. It localises to the cell surface. It catalyses the reaction (2R)-2-phosphoglycerate = phosphoenolpyruvate + H2O. It functions in the pathway carbohydrate degradation; glycolysis; pyruvate from D-glyceraldehyde 3-phosphate: step 4/5. Its function is as follows. Catalyzes the reversible conversion of 2-phosphoglycerate (2-PG) into phosphoenolpyruvate (PEP). It is essential for the degradation of carbohydrates via glycolysis. The chain is Enolase from Synechococcus sp. (strain CC9311).